The following is a 380-amino-acid chain: Glutamine synthetase, chloroplastic (380 aa).

In terms of domain architecture, GS beta-grasp spans 35 to 125 (MAAEYIWADG…VMCEVFAPDG (91 aa)). A GS catalytic domain is found at 132 to 380 (TRAKLREIID…RLLIKTVLKG (249 aa)).

Belongs to the glutamine synthetase family. As to quaternary structure, homooctamer.

The protein resides in the plastid. Its subcellular location is the chloroplast. It catalyses the reaction L-glutamate + NH4(+) + ATP = L-glutamine + ADP + phosphate + H(+). The sequence is that of Glutamine synthetase, chloroplastic (GLN2) from Chlamydomonas reinhardtii (Chlamydomonas smithii).